Here is a 1196-residue protein sequence, read N- to C-terminus: Major DNA-binding protein (1196 aa).

A zinc finger spans residues 499–512; sequence CNLCTFDTRHACVH. Short sequence motifs (required for filament formation) lie at residues 843–844 and 1142–1144; these read FW and FNF. A disordered region spans residues 1158 to 1196; the sequence is GGPGAPGPAFAGRKRAFHGDDPFGEGPPDKKGDLTLDML. Residues 1170–1196 form a required for nuclear localization region; that stretch reads RKRAFHGDDPFGEGPPDKKGDLTLDML. Residues 1174 to 1196 show a composition bias toward basic and acidic residues; sequence FHGDDPFGEGPPDKKGDLTLDML.

Belongs to the herpesviridae major DNA-binding protein family. As to quaternary structure, homooligomers. Forms double-helical filaments necessary for the formation of replication compartments within the host nucleus. Interacts with the origin-binding protein. Interacts with the helicase primase complex; this interaction stimulates primer synthesis activity of the helicase-primase complex. Interacts with the DNA polymerase. Interacts with the alkaline exonuclease; this interaction increases its nuclease processivity.

It localises to the host nucleus. In terms of biological role, plays several crucial roles in viral infection. Participates in the opening of the viral DNA origin to initiate replication by interacting with the origin-binding protein. May disrupt loops, hairpins and other secondary structures present on ssDNA to reduce and eliminate pausing of viral DNA polymerase at specific sites during elongation. Promotes viral DNA recombination by performing strand-transfer, characterized by the ability to transfer a DNA strand from a linear duplex to a complementary single-stranded DNA circle. Can also catalyze the renaturation of complementary single strands. Additionally, reorganizes the host cell nucleus, leading to the formation of prereplicative sites and replication compartments. This process is driven by the protein which can form double-helical filaments in the absence of DNA. This Human herpesvirus 1 (strain KOS) (HHV-1) protein is Major DNA-binding protein.